A 224-amino-acid chain; its full sequence is 7-cyano-7-deazaguanine synthase (224 aa).

An ATP-binding site is contributed by 12-22 (LSGGLDSSTVT). Zn(2+) is bound by residues C193, C201, C204, and C207.

It belongs to the QueC family. Requires Zn(2+) as cofactor.

The catalysed reaction is 7-carboxy-7-deazaguanine + NH4(+) + ATP = 7-cyano-7-deazaguanine + ADP + phosphate + H2O + H(+). Its pathway is purine metabolism; 7-cyano-7-deazaguanine biosynthesis. Catalyzes the ATP-dependent conversion of 7-carboxy-7-deazaguanine (CDG) to 7-cyano-7-deazaguanine (preQ(0)). The protein is 7-cyano-7-deazaguanine synthase of Prochlorococcus marinus subsp. pastoris (strain CCMP1986 / NIES-2087 / MED4).